A 185-amino-acid polypeptide reads, in one-letter code: uncharacterized protein (185 aa).

One can recognise an N-acetyltransferase domain in the interval 9-169; the sequence is VILELAKESD…NGREDDKPLL (161 aa).

This is an uncharacterized protein from Bacillus subtilis (strain 168).